Reading from the N-terminus, the 266-residue chain is Hydroxyacylglutathione hydrolase (266 aa).

His-53, His-55, Asp-57, His-58, His-118, Asp-140, and His-178 together coordinate Zn(2+).

It belongs to the metallo-beta-lactamase superfamily. Glyoxalase II family. As to quaternary structure, monomer. The cofactor is Zn(2+).

The catalysed reaction is an S-(2-hydroxyacyl)glutathione + H2O = a 2-hydroxy carboxylate + glutathione + H(+). Its pathway is secondary metabolite metabolism; methylglyoxal degradation; (R)-lactate from methylglyoxal: step 2/2. Thiolesterase that catalyzes the hydrolysis of S-D-lactoyl-glutathione to form glutathione and D-lactic acid. The sequence is that of Hydroxyacylglutathione hydrolase from Cupriavidus taiwanensis (strain DSM 17343 / BCRC 17206 / CCUG 44338 / CIP 107171 / LMG 19424 / R1) (Ralstonia taiwanensis (strain LMG 19424)).